A 283-amino-acid chain; its full sequence is Protein-S-isoprenylcysteine O-methyltransferase (283 aa).

Residues 1 to 15 (MAAARRGSAGSEARL) lie on the Cytoplasmic side of the membrane. A helical membrane pass occupies residues 16–32 (SLATFLLGASVLALPLL). The Lumenal segment spans residues 33-40 (TRAGLQGR). Residues 41 to 58 (TGLALYVAGLNALLLLLY) traverse the membrane as a helical segment. At 59–68 (RPPRYQIAIR) the chain is on the cytoplasmic side. Residues 69 to 86 (ACFLGFVFGCGVLLSFSQ) form a helical membrane-spanning segment. Residues 87–91 (SSWNH) lie on the Lumenal side of the membrane. A helical transmembrane segment spans residues 92–111 (FGWYVCSLSLFHYSEYLVTA). Over 112–130 (VNNPKSLSLDSFLLNHSLE) the chain is Cytoplasmic. The chain crosses the membrane as a helical span at residues 131-148 (YTVAALSSWIEFTLENIF). Residues 149 to 153 (WPELK) lie on the Lumenal side of the membrane. A helical membrane pass occupies residues 154 to 173 (QITWLSATGLLMVVFGECLR). Residues 174-211 (KAAMFTAGSNFNHVVQSEKSDTHTLVTSGVYAWCRHPS) are Cytoplasmic-facing. S-adenosyl-L-methionine is bound by residues Gln-189, 196 to 199 (HTLV), Tyr-204, and 209 to 212 (HPSY). Residues 212 to 227 (YVGWFYWSIGTQVMLC) form a helical membrane-spanning segment. A topological domain (lumenal) is located at residue Asn-228. A helical membrane pass occupies residues 229 to 243 (PICGVVYALTVWRFF). Residues 244–283 (RDRTEEEEISLIHFFGEEYLDYKKRVPTGLPFIKGVKVEL) are Cytoplasmic-facing. Arg-246 lines the substrate pocket. S-adenosyl-L-methionine is bound at residue Glu-250.

This sequence belongs to the class VI-like SAM-binding methyltransferase superfamily. Isoprenylcysteine carboxyl methyltransferase family. Highly enriched in adult cerebellum, with a low level expression in other brain regions.

Its subcellular location is the endoplasmic reticulum membrane. The enzyme catalyses [protein]-C-terminal S-[(2E,6E)-farnesyl]-L-cysteine + S-adenosyl-L-methionine = [protein]-C-terminal S-[(2E,6E)-farnesyl]-L-cysteine methyl ester + S-adenosyl-L-homocysteine. Functionally, catalyzes the post-translational methylation of isoprenylated C-terminal cysteine residues. The protein is Protein-S-isoprenylcysteine O-methyltransferase (Icmt) of Mus musculus (Mouse).